The sequence spans 339 residues: 3-isopropylmalate dehydrogenase (339 aa).

Substrate-binding residues include R87, R97, R124, and D214. Mg(2+)-binding residues include D214, D238, and D242. 274-286 contributes to the NAD(+) binding site; that stretch reads GSAPDIAGQGIAD.

Belongs to the isocitrate and isopropylmalate dehydrogenases family. LeuB type 2 subfamily. Homodimer. It depends on Mg(2+) as a cofactor. Requires Mn(2+) as cofactor.

Its subcellular location is the cytoplasm. The catalysed reaction is (2R,3S)-3-isopropylmalate + NAD(+) = 4-methyl-2-oxopentanoate + CO2 + NADH. The protein operates within amino-acid biosynthesis; L-leucine biosynthesis; L-leucine from 3-methyl-2-oxobutanoate: step 3/4. Its function is as follows. Catalyzes the oxidation of 3-carboxy-2-hydroxy-4-methylpentanoate (3-isopropylmalate) to 3-carboxy-4-methyl-2-oxopentanoate. The product decarboxylates to 4-methyl-2 oxopentanoate. The polypeptide is 3-isopropylmalate dehydrogenase (Mycobacterium ulcerans (strain Agy99)).